Consider the following 236-residue polypeptide: Purine nucleoside phosphorylase DeoD-type 2 (236 aa).

His5 lines the a purine D-ribonucleoside pocket. Residues Gly21, Arg25, Arg44, and 88–91 contribute to the phosphate site; that span reads RVGS. Residues 180–182 and 204–205 contribute to the a purine D-ribonucleoside site; these read DME and SD. The active-site Proton donor is the Asp205.

This sequence belongs to the PNP/UDP phosphorylase family. In terms of assembly, homohexamer; trimer of homodimers.

It carries out the reaction a purine D-ribonucleoside + phosphate = a purine nucleobase + alpha-D-ribose 1-phosphate. The enzyme catalyses a purine 2'-deoxy-D-ribonucleoside + phosphate = a purine nucleobase + 2-deoxy-alpha-D-ribose 1-phosphate. Its function is as follows. Catalyzes the reversible phosphorolytic breakdown of the N-glycosidic bond in the beta-(deoxy)ribonucleoside molecules, with the formation of the corresponding free purine bases and pentose-1-phosphate. The sequence is that of Purine nucleoside phosphorylase DeoD-type 2 from Photobacterium profundum (strain SS9).